The primary structure comprises 179 residues: Transcription factor 21 (179 aa).

The disordered stretch occupies residues 23–87; the sequence is IKLDPNKEFG…QVQRNAANAR (65 aa). Positions 34-46 are enriched in polar residues; it reads SNDSNEESSTCDN. Basic residues predominate over residues 50 to 64; the sequence is KKGRGTSGKRRKAPS. Positions 70–80 are enriched in polar residues; that stretch reads GNINQEGKQVQ. Residues 79–131 form the bHLH domain; sequence VQRNAANARERARMRVLSKAFSRLKTTLPWVPPDTKLSKLDTLRLASSYIAHL.

As to quaternary structure, efficient DNA binding requires dimerization with another bHLH protein.

Its subcellular location is the nucleus. Functionally, involved in epithelial-mesenchymal interactions in kidney and lung morphogenesis that include epithelial differentiation and branching morphogenesis. This is Transcription factor 21 (tcf21) from Xenopus tropicalis (Western clawed frog).